The primary structure comprises 520 residues: Versicolorin B desaturase (520 aa).

The chain crosses the membrane as a helical span at residues 22–42; that stretch reads IFTTILSIFGIALSAVAAWGI. N-linked (GlcNAc...) asparagine glycosylation is found at Asn-266 and Asn-426. Position 462 (Cys-462) interacts with heme.

This sequence belongs to the cytochrome P450 family. Heme serves as cofactor.

Its subcellular location is the membrane. It catalyses the reaction versicolorin B + NADPH + O2 + H(+) = versicolorin A + NADP(+) + 2 H2O. Its pathway is mycotoxin biosynthesis. Its function is as follows. Versicolorin B desaturase; part of the fragmented gene cluster that mediates the biosynthesis of dothistromin (DOTH), a polyketide toxin very similar in structure to the aflatoxin precursor, versicolorin B. The first step of the pathway is the conversion of acetate to norsolorinic acid (NOR) and requires the fatty acid synthase subunits hexA and hexB, as well as the polyketide synthase pksA. PksA combines a hexanoyl starter unit and 7 malonyl-CoA extender units to synthesize the precursor NOR. The hexanoyl starter unit is provided to the acyl-carrier protein (ACP) domain by the fungal fatty acid synthase hexA/hexB. The second step is the conversion of NOR to averantin (AVN) and requires the norsolorinic acid ketoreductase nor1, which catalyzes the dehydration of norsolorinic acid to form (1'S)-averantin. The cytochrome P450 monooxygenase avnA then catalyzes the hydroxylation of AVN to 5'hydroxyaverantin (HAVN). The next step is performed by adhA that transforms HAVN to averufin (AVF). Averufin might then be converted to hydroxyversicolorone by cypX and avfA. Hydroxyversicolorone is further converted versiconal hemiacetal acetate (VHA) by moxY. VHA is then the substrate for the versiconal hemiacetal acetate esterase est1 to yield versiconal (VAL). Versicolorin B synthase vbsA then converts VAL to versicolorin B (VERB) by closing the bisfuran ring. Then, the activity of the versicolorin B desaturase verB leads to versicolorin A (VERA). DotB, a predicted chloroperoxidase, may perform epoxidation of the A-ring of VERA. Alternatively, a cytochrome P450, such as cypX or avnA could catalyze this step. It is also possible that another, uncharacterized, cytochrome P450 enzyme is responsible for this step. Opening of the epoxide could potentially be achieved by the epoxide hydrolase epoA. However, epoA seems not to be required for DOTH biosynthesis, but other epoxide hydrolases may have the ability to complement this hydrolysis. Alternatively, opening of the epoxide ring could be achieved non-enzymatically. The next step is the deoxygenation of ring A to yield the 5,8-dihydroxyanthraquinone which is most likely catalyzed by the NADPH dehydrogenase encoded by ver1. The last stages of DOTH biosynthesis are proposed to involve hydroxylation of the bisfuran. OrdB and norB might have oxidative roles here. An alternative possibility is that cytochrome P450 monoogenases such as avnA and cypX might perform these steps in addition to previously proposed steps. In Dothistroma septosporum (strain NZE10 / CBS 128990) (Red band needle blight fungus), this protein is Versicolorin B desaturase.